A 133-amino-acid chain; its full sequence is Beta-synuclein (133 aa).

2 consecutive repeat copies span residues 20 to 30 (EKTKQGVTEAA) and 31 to 41 (EKTKEGVLYVG). The tract at residues 20 to 66 (EKTKQGVTEAAEKTKEGVLYVGSKTSGVVQGVASVAEKTKEQASHLG) is 4 X 11 AA tandem repeats of [EGS]-K-T-K-[EQ]-[GQ]-V-X(4). Residues 42–55 (SKTSGVVQGVASVA) form a 3; approximate repeat. A Phosphoserine modification is found at Ser-45. Repeat 4 spans residues 56-66 (EKTKEQASHLG). The interval 96–133 (EVAQEAAEEPLIEPLMEPEGESYEDSPQEEYQEYEPEA) is disordered. Residues 97-133 (VAQEAAEEPLIEPLMEPEGESYEDSPQEEYQEYEPEA) are compositionally biased toward acidic residues. Ser-117 bears the Phosphoserine; by BARK1, CK2 and GRK5 mark.

It belongs to the synuclein family. Post-translationally, phosphorylated. Phosphorylation by G-protein coupled receptor kinases (GRK) is more efficient than phosphorylation by CK1, CK2 and CaM-kinase II. As to expression, highly expressed in the brain.

It is found in the cytoplasm. In terms of biological role, may be involved in neuronal plasticity. In Mus musculus (Mouse), this protein is Beta-synuclein (Sncb).